The primary structure comprises 165 residues: LOB domain-containing protein 21 (165 aa).

Positions 10–111 (SSCAACKLLK…HDLAVARTRL (102 aa)) constitute an LOB domain.

It belongs to the LOB domain-containing protein family.

The sequence is that of LOB domain-containing protein 21 (LBD21) from Arabidopsis thaliana (Mouse-ear cress).